A 201-amino-acid chain; its full sequence is Ependymin-related protein 2 (201 aa).

The signal sequence occupies residues 1–21 (MILQVVLLLACLSGAIVSTGA). N-linked (GlcNAc...) asparagine glycans are attached at residues Asn38 and Asn137. The Microbody targeting signal motif lies at 199–201 (CRA).

Belongs to the ependymin family. In terms of tissue distribution, component of the acid-soluble and acid-insoluble organic matrix of calcified shell layers (at protein level).

The protein resides in the secreted. This Haliotis asinina (Donkey's ear abalone) protein is Ependymin-related protein 2.